A 224-amino-acid polypeptide reads, in one-letter code: Charged multivesicular body protein 4c (224 aa).

Disordered regions lie at residues 1-21 (MSVF…PTPQ) and 182-224 (SGPE…AWAM). Residues 7–17 (LFGGGGKGGKG) are compositionally biased toward gly residues. Residues 21-221 (QEAIQKLRET…DEDDMEELKA (201 aa)) are a coiled coil.

It belongs to the SNF7 family. In terms of assembly, probable core component of the endosomal sorting required for transport complex III (ESCRT-III). ESCRT-III components are thought to multimerize to form a flat lattice on the perimeter membrane of the endosome.

It is found in the cytoplasm. The protein localises to the cytosol. Its subcellular location is the late endosome membrane. In terms of biological role, probable core component of the endosomal sorting required for transport complex III (ESCRT-III) which is involved in multivesicular bodies (MVBs) formation and sorting of endosomal cargo proteins into MVBs. MVBs contain intraluminal vesicles (ILVs) that are generated by invagination and scission from the limiting membrane of the endosome and mostly are delivered to lysosomes enabling degradation of membrane proteins, such as stimulated growth factor receptors, lysosomal enzymes and lipids. Key component of the cytokinesis checkpoint, a process required to delay abscission to prevent both premature resolution of intercellular chromosome bridges and accumulation of DNA damage. The sequence is that of Charged multivesicular body protein 4c (chmp4c) from Danio rerio (Zebrafish).